Reading from the N-terminus, the 65-residue chain is Small, acid-soluble spore protein H 3 (65 aa).

This sequence belongs to the SspH family.

It is found in the spore core. The sequence is that of Small, acid-soluble spore protein H 3 from Geobacillus thermodenitrificans (strain NG80-2).